The following is a 582-amino-acid chain: Aspartate--tRNA ligase (582 aa).

L-aspartate is bound at residue Glu174. An aspartate region spans residues Gln198–Lys201. Arg220 contributes to the L-aspartate binding site. ATP is bound by residues Arg220 to Glu222 and Gln229. Residue His443 coordinates L-aspartate. Glu477 serves as a coordination point for ATP. Arg484 serves as a coordination point for L-aspartate. Gly529 to Arg532 lines the ATP pocket.

This sequence belongs to the class-II aminoacyl-tRNA synthetase family. Type 1 subfamily. As to quaternary structure, homodimer.

Its subcellular location is the cytoplasm. It carries out the reaction tRNA(Asp) + L-aspartate + ATP = L-aspartyl-tRNA(Asp) + AMP + diphosphate. In terms of biological role, catalyzes the attachment of L-aspartate to tRNA(Asp) in a two-step reaction: L-aspartate is first activated by ATP to form Asp-AMP and then transferred to the acceptor end of tRNA(Asp). The polypeptide is Aspartate--tRNA ligase (Streptococcus pyogenes serotype M1).